The chain runs to 184 residues: Glutathione-regulated potassium-efflux system ancillary protein KefG (184 aa).

It belongs to the NAD(P)H dehydrogenase (quinone) family. KefG subfamily. In terms of assembly, interacts with KefB.

It localises to the cell inner membrane. It catalyses the reaction a quinone + NADH + H(+) = a quinol + NAD(+). It carries out the reaction a quinone + NADPH + H(+) = a quinol + NADP(+). Regulatory subunit of a potassium efflux system that confers protection against electrophiles. Required for full activity of KefB. This Shigella dysenteriae serotype 1 (strain Sd197) protein is Glutathione-regulated potassium-efflux system ancillary protein KefG.